A 449-amino-acid chain; its full sequence is Bifunctional protein GlmU (449 aa).

A pyrophosphorylase region spans residues 1-225 (MLSVAILAAG…NGELQGINNR (225 aa)). Residues 7–10 (LAAG), lysine 21, glutamine 73, and 78–79 (GT) each bind UDP-N-acetyl-alpha-D-glucosamine. Aspartate 103 is a binding site for Mg(2+). Glycine 140, glutamate 154, asparagine 169, and asparagine 223 together coordinate UDP-N-acetyl-alpha-D-glucosamine. Residue asparagine 223 coordinates Mg(2+). A linker region spans residues 226-246 (IQLSKCEEIIQNSIKEKHMLN). Residues 247–449 (GVTFINQASC…NIDNWERKKP (203 aa)) form an N-acetyltransferase region. The UDP-N-acetyl-alpha-D-glucosamine site is built by arginine 328 and lysine 346. The active-site Proton acceptor is the histidine 358. 2 residues coordinate UDP-N-acetyl-alpha-D-glucosamine: tyrosine 361 and asparagine 372. Alanine 375, alanine 418, and arginine 435 together coordinate acetyl-CoA.

This sequence in the N-terminal section; belongs to the N-acetylglucosamine-1-phosphate uridyltransferase family. In the C-terminal section; belongs to the transferase hexapeptide repeat family. In terms of assembly, homotrimer. Mg(2+) serves as cofactor.

The protein resides in the cytoplasm. The enzyme catalyses alpha-D-glucosamine 1-phosphate + acetyl-CoA = N-acetyl-alpha-D-glucosamine 1-phosphate + CoA + H(+). It carries out the reaction N-acetyl-alpha-D-glucosamine 1-phosphate + UTP + H(+) = UDP-N-acetyl-alpha-D-glucosamine + diphosphate. The protein operates within nucleotide-sugar biosynthesis; UDP-N-acetyl-alpha-D-glucosamine biosynthesis; N-acetyl-alpha-D-glucosamine 1-phosphate from alpha-D-glucosamine 6-phosphate (route II): step 2/2. It functions in the pathway nucleotide-sugar biosynthesis; UDP-N-acetyl-alpha-D-glucosamine biosynthesis; UDP-N-acetyl-alpha-D-glucosamine from N-acetyl-alpha-D-glucosamine 1-phosphate: step 1/1. Its pathway is bacterial outer membrane biogenesis; LPS lipid A biosynthesis. In terms of biological role, catalyzes the last two sequential reactions in the de novo biosynthetic pathway for UDP-N-acetylglucosamine (UDP-GlcNAc). The C-terminal domain catalyzes the transfer of acetyl group from acetyl coenzyme A to glucosamine-1-phosphate (GlcN-1-P) to produce N-acetylglucosamine-1-phosphate (GlcNAc-1-P), which is converted into UDP-GlcNAc by the transfer of uridine 5-monophosphate (from uridine 5-triphosphate), a reaction catalyzed by the N-terminal domain. In Prochlorococcus marinus (strain MIT 9312), this protein is Bifunctional protein GlmU.